The sequence spans 100 residues: Phosphoribosylformylglycinamidine synthase subunit PurS (100 aa).

It belongs to the PurS family. Homodimer. Part of the FGAM synthase complex composed of 1 PurL, 1 PurQ and 2 PurS subunits.

The protein resides in the cytoplasm. It catalyses the reaction N(2)-formyl-N(1)-(5-phospho-beta-D-ribosyl)glycinamide + L-glutamine + ATP + H2O = 2-formamido-N(1)-(5-O-phospho-beta-D-ribosyl)acetamidine + L-glutamate + ADP + phosphate + H(+). It participates in purine metabolism; IMP biosynthesis via de novo pathway; 5-amino-1-(5-phospho-D-ribosyl)imidazole from N(2)-formyl-N(1)-(5-phospho-D-ribosyl)glycinamide: step 1/2. Functionally, part of the phosphoribosylformylglycinamidine synthase complex involved in the purines biosynthetic pathway. Catalyzes the ATP-dependent conversion of formylglycinamide ribonucleotide (FGAR) and glutamine to yield formylglycinamidine ribonucleotide (FGAM) and glutamate. The FGAM synthase complex is composed of three subunits. PurQ produces an ammonia molecule by converting glutamine to glutamate. PurL transfers the ammonia molecule to FGAR to form FGAM in an ATP-dependent manner. PurS interacts with PurQ and PurL and is thought to assist in the transfer of the ammonia molecule from PurQ to PurL. The protein is Phosphoribosylformylglycinamidine synthase subunit PurS of Synechocystis sp. (strain ATCC 27184 / PCC 6803 / Kazusa).